A 97-amino-acid chain; its full sequence is Co-chaperonin GroES (97 aa).

It belongs to the GroES chaperonin family. As to quaternary structure, heptamer of 7 subunits arranged in a ring. Interacts with the chaperonin GroEL.

It localises to the cytoplasm. In terms of biological role, together with the chaperonin GroEL, plays an essential role in assisting protein folding. The GroEL-GroES system forms a nano-cage that allows encapsulation of the non-native substrate proteins and provides a physical environment optimized to promote and accelerate protein folding. GroES binds to the apical surface of the GroEL ring, thereby capping the opening of the GroEL channel. This Blochmanniella floridana protein is Co-chaperonin GroES.